Here is a 303-residue protein sequence, read N- to C-terminus: Phosphoribosylaminoimidazole-succinocarboxamide synthase (303 aa).

This sequence belongs to the SAICAR synthetase family.

The enzyme catalyses 5-amino-1-(5-phospho-D-ribosyl)imidazole-4-carboxylate + L-aspartate + ATP = (2S)-2-[5-amino-1-(5-phospho-beta-D-ribosyl)imidazole-4-carboxamido]succinate + ADP + phosphate + 2 H(+). Its pathway is purine metabolism; IMP biosynthesis via de novo pathway; 5-amino-1-(5-phospho-D-ribosyl)imidazole-4-carboxamide from 5-amino-1-(5-phospho-D-ribosyl)imidazole-4-carboxylate: step 1/2. This is Phosphoribosylaminoimidazole-succinocarboxamide synthase (ADE1) from Pichia angusta (Yeast).